The sequence spans 481 residues: Polygalacturonase QRT3 (481 aa).

Residues 1-27 form the signal peptide; sequence MELRKSQVAMPVFLAIMSLMVSQVVFA. 3 PbH1 repeats span residues 203–226, 261–282, and 356–377; these read SLRT…LVKS, GNDN…MVSG, and IRGV…QIVQ. N-linked (GlcNAc...) asparagine glycans are attached at residues asparagine 415 and asparagine 455.

This sequence belongs to the glycosyl hydrolase 28 family. In terms of tissue distribution, expressed in the tapetum cells in the anthers and in the ovules of open flowers.

The protein localises to the secreted. It is found in the cell wall. The enzyme catalyses (1,4-alpha-D-galacturonosyl)n+m + H2O = (1,4-alpha-D-galacturonosyl)n + (1,4-alpha-D-galacturonosyl)m.. Its function is as follows. Polygalacturonase required for degrading the pollen mother cell wall during microspore development. The chain is Polygalacturonase QRT3 (QRT3) from Arabidopsis thaliana (Mouse-ear cress).